We begin with the raw amino-acid sequence, 245 residues long: Ribonuclease PH (245 aa).

Phosphate-binding positions include R86 and 124–126; that span reads GTR.

It belongs to the RNase PH family. Homohexameric ring arranged as a trimer of dimers.

It carries out the reaction tRNA(n+1) + phosphate = tRNA(n) + a ribonucleoside 5'-diphosphate. Phosphorolytic 3'-5' exoribonuclease that plays an important role in tRNA 3'-end maturation. Removes nucleotide residues following the 3'-CCA terminus of tRNAs; can also add nucleotides to the ends of RNA molecules by using nucleoside diphosphates as substrates, but this may not be physiologically important. Probably plays a role in initiation of 16S rRNA degradation (leading to ribosome degradation) during starvation. This is Ribonuclease PH from Bacillus cereus (strain B4264).